Here is a 507-residue protein sequence, read N- to C-terminus: ATP synthase subunit alpha, chloroplastic (507 aa).

An ATP-binding site is contributed by 170–177 (GDRQTGKT).

Belongs to the ATPase alpha/beta chains family. F-type ATPases have 2 components, CF(1) - the catalytic core - and CF(0) - the membrane proton channel. CF(1) has five subunits: alpha(3), beta(3), gamma(1), delta(1), epsilon(1). CF(0) has four main subunits: a, b, b' and c.

Its subcellular location is the plastid. It localises to the chloroplast thylakoid membrane. The enzyme catalyses ATP + H2O + 4 H(+)(in) = ADP + phosphate + 5 H(+)(out). Its function is as follows. Produces ATP from ADP in the presence of a proton gradient across the membrane. The alpha chain is a regulatory subunit. The polypeptide is ATP synthase subunit alpha, chloroplastic (Oryza nivara (Indian wild rice)).